Reading from the N-terminus, the 2179-residue chain is Voltage-dependent L-type calcium channel subunit alpha-1D (2179 aa).

Disordered regions lie at residues 1 to 21 (MMMM…EDHA), 30 to 49 (TRLP…SKQT), and 64 to 100 (KAAQ…SSNS). Topologically, residues 1 to 126 (MMMMMMMKKM…RACISIVEWK (126 aa)) are cytoplasmic. Positions 38 to 49 (GPTSQPNSSKQT) are enriched in polar residues. The segment covering 82–93 (QRKRQQYAKSKK) has biased composition (basic residues). The I repeat unit spans residues 113–409 (NPIRRACISI…LVLGVLSGEF (297 aa)). A helical membrane pass occupies residues 127–145 (PFDIFILLAIFANCVALAI). At 146-163 (YIPFPEDDSNSTNHNLEK) the chain is on the extracellular side. Residues 164-183 (VEYAFLIIFTVETFLKIIAY) traverse the membrane as a helical segment. Residues 184–195 (GLLLHPNAYVRN) lie on the Cytoplasmic side of the membrane. A helical membrane pass occupies residues 196–214 (GWNLLDFVIVIVGLFSVIL). At 215–235 (EQLTKETEGGNHSSGKSGGFD) the chain is on the extracellular side. The chain crosses the membrane as a helical span at residues 236–254 (VKALRAFRVLRPLRLVSGV). Residues 255-273 (PSLQVVLNSIIKAMVPLLH) are Cytoplasmic-facing. A helical transmembrane segment spans residues 274-293 (IALLVLFVIIIYAIIGLELF). The Extracellular portion of the chain corresponds to 294 to 381 (IGKMHKTCFF…WVNDAIGWEW (88 aa)). E364 contributes to the Ca(2+) binding site. Residues 382 to 406 (PWVYFVSLIILGSFFVLNLVLGVLS) form a helical membrane-spanning segment. The Cytoplasmic segment spans residues 407–543 (GEFSKEREKA…RRCRAAVKSV (137 aa)). The segment at 429–446 (QQLEEDLKGYLDWITQAE) is binding to the beta subunit. The segment at 449-480 (DPENEEEGGEEGKRNTSMPTSETESVNTENVS) is disordered. The segment covering 463–479 (NTSMPTSETESVNTENV) has biased composition (polar residues). An II repeat occupies 529 to 775 (NRFNRRRCRA…VFLAIAVDNL (247 aa)). Residues 544–563 (TFYWLVIVLVFLNTLTISSE) form a helical membrane-spanning segment. Residues 564 to 578 (HYNQPDWLTQIQDIA) are Extracellular-facing. Residues 579-597 (NKVLLALFTCEMLVKMYSL) traverse the membrane as a helical segment. At 598–605 (GLQAYFVS) the chain is on the cytoplasmic side. The chain crosses the membrane as a helical span at residues 606–624 (LFNRFDCFVVCGGITETIL). The Extracellular portion of the chain corresponds to 625-634 (VELELMSPLG). A helical transmembrane segment spans residues 635–653 (VSVFRCVRLLRIFKVTRHW). Residues 654–672 (TSLSNLVASLLNSMKSIAS) are Cytoplasmic-facing. The chain crosses the membrane as a helical span at residues 673–693 (LLLLLFLFIIIFSLLGMQLFG). At 694-747 (GKFNFDETQTKRSTFDNFPQALLTVFQILTGEDWNAVMYDGIMAYGGPSSSGMI) the chain is on the extracellular side. A Ca(2+)-binding site is contributed by E725. The chain crosses the membrane as a helical span at residues 748–772 (VCIYFIILFICGNYILLNVFLAIAV). A coiled-coil region spans residues 771-810 (AVDNLADAESLNTAQKEEAEEKERKKIARKESLENKKNNK). Topologically, residues 773–906 (DNLADAESLN…VGCHKLINHH (134 aa)) are cytoplasmic. The segment covering 786 to 810 (KEEAEEKERKKIARKESLENKKNNK) has biased composition (basic and acidic residues). Residues 786 to 870 (KEEAEEKERK…AGPRPRRISE (85 aa)) are disordered. Residues 811–822 (PEVNQIANSDNK) are compositionally biased toward polar residues. The segment covering 845 to 858 (VGEEEEEEEEDEPE) has biased composition (acidic residues). Residues 893-1175 (NPIRVGCHKL…IFVGFVIVTF (283 aa)) form an III repeat. Residues 907–925 (IFTNLILVFIMLSSAALAA) traverse the membrane as a helical segment. Over 926–941 (EDPIRSHSFRNTILGY) the chain is Extracellular. The helical transmembrane segment at 942-961 (FDYAFTAIFTVEILLKMTTF) threads the bilayer. Topologically, residues 962–973 (GAFLHKGAFCRN) are cytoplasmic. The chain crosses the membrane as a helical span at residues 974-992 (YFNLLDMLVVGVSLVSFGI). The Extracellular portion of the chain corresponds to 993 to 998 (QSSAIS). Residues 999 to 1018 (VVKILRVLRVLRPLRAINRA) traverse the membrane as a helical segment. The Cytoplasmic segment spans residues 1019–1037 (KGLKHVVQCVFVAIRTIGN). Residues 1038 to 1057 (IMIVTTLLQFMFACIGVQLF) form a helical membrane-spanning segment. Topologically, residues 1058 to 1147 (KGKFYRCTDE…VGPVYNYRVE (90 aa)) are extracellular. A dihydropyridine binding region spans residues 1095–1185 (RIWQNSDFNF…QEQGEKEYKN (91 aa)). Residue E1121 coordinates Ca(2+). A helical membrane pass occupies residues 1148–1168 (ISIFFIIYIIIVAFFMMNIFV). Over 1169-1225 (GFVIVTFQEQGEKEYKNCELDKNQRQCVEYALKARPLRRYIPKNPYQYKFWYVVNSS) the chain is Cytoplasmic. Residues 1212 to 1487 (NPYQYKFWYV…LFVAVIMDNF (276 aa)) form an IV repeat. Residues 1226-1244 (PFEYMMFVLIMLNTLCLAM) traverse the membrane as a helical segment. Residues 1245–1259 (QHYEQSKMFNDAMDI) are Extracellular-facing. Residues 1260-1279 (LNMVFTGVFTVEMVLKVIAF) form a helical membrane-spanning segment. At 1280–1286 (KPKGYFS) the chain is on the cytoplasmic side. The helical transmembrane segment at 1287 to 1308 (DAWNTFDSLIVIGSIIDVALSE) threads the bilayer. Over 1309–1333 (ADPSESETIPLPTATPGNSEESNRI) the chain is Extracellular. The helical transmembrane segment at 1334–1353 (SITFFRLFRVMRLVKLLSRG) threads the bilayer. Residues 1354 to 1372 (EGIRTLLWTFIKSFQALPY) lie on the Cytoplasmic side of the membrane. The chain crosses the membrane as a helical span at residues 1373-1392 (VALLIAMLFFIYAVIGMQMF). Residues 1393–1459 (GKVAMRDNNQ…GEEYTCGSNF (67 aa)) are Extracellular-facing. Residues 1440–1506 (LCDPDSDYNP…LGPHHLDEFK (67 aa)) are dihydropyridine binding. The segment at 1452-1495 (EYTCGSNFAIVYFISFYMLCAFLIINLFVAVIMDNFDYLTRDWS) is phenylalkylamine binding. Residues 1460-1484 (AIVYFISFYMLCAFLIINLFVAVIM) form a helical membrane-spanning segment. Topologically, residues 1485–2179 (DNFDYLTRDW…ADEMICITTL (695 aa)) are cytoplasmic. 3 disordered regions span residues 1704-1789 (LLGN…AHGK), 1896-1941 (FERP…RSSF), and 2135-2171 (GDMG…DLAD). Over residues 1764–1782 (SIGKQAPTSTNANLNNANM) the composition is skewed to polar residues. The segment covering 2156–2171 (SDEEPDPGREEEDLAD) has biased composition (acidic residues).

Belongs to the calcium channel alpha-1 subunit (TC 1.A.1.11) family. CACNA1D subfamily. As to quaternary structure, voltage-dependent calcium channels are multisubunit complexes, consisting of alpha-1, alpha-2, beta and delta subunits in a 1:1:1:1 ratio. The channel activity is directed by the pore-forming and voltage-sensitive alpha-1 subunit. In many cases, this subunit is sufficient to generate voltage-sensitive calcium channel activity. The auxiliary subunits beta and alpha-2/delta linked by a disulfide bridge regulate the channel activity. Interacts (via IQ domain) with CABP1 and CABP4 in a calcium independent manner. Interacts with RIMBP2. As to expression, expressed in the inner hair cells (IHC) of the cochlea.

It is found in the membrane. It carries out the reaction Ca(2+)(in) = Ca(2+)(out). Voltage-sensitive calcium channels (VSCC) mediate the entry of calcium ions into excitable cells and are also involved in a variety of calcium-dependent processes, including muscle contraction, hormone or neurotransmitter release, gene expression, cell motility, cell division and cell death. The isoform alpha-1D gives rise to L-type calcium currents. Long-lasting (L-type) calcium channels belong to the 'high-voltage activated' (HVA) group. They are blocked by dihydropyridines (DHP), phenylalkylamines, and by benzothiazepines. This chain is Voltage-dependent L-type calcium channel subunit alpha-1D (Cacna1d), found in Mus musculus (Mouse).